The following is a 78-amino-acid chain: Teretoxin Tsu6.15 (78 aa).

The first 21 residues, 1-21 (MATSGRLLCFCLVLGLVFESL), serve as a signal peptide directing secretion. Positions 22-47 (GYSEARPPRDRKRTVTAKRYDPLAQR) are excised as a propeptide.

The protein belongs to the teretoxin M (TM) superfamily. Contains 3 disulfide bonds. In terms of tissue distribution, expressed by the venom duct.

The protein localises to the secreted. The sequence is that of Teretoxin Tsu6.15 from Terebra subulata (Chocolate spotted auger).